Reading from the N-terminus, the 280-residue chain is Divalent cation/proton antiporter GDT1 (280 aa).

Over 1 to 3 (MGN) the chain is Cytoplasmic. Residues 4–24 (MIKKASLIALLPLFTAAAAAA) traverse the membrane as a helical segment. The Vacuolar portion of the chain corresponds to 25 to 45 (TDAETSMESGSSSHLKSFLMS). Residues 46–66 (VSMIGLSEIGDKTFLIAALMA) traverse the membrane as a helical segment. Topologically, residues 67 to 71 (MRHKR) are cytoplasmic. Residues 72 to 92 (VLVFSAAATSLAIMTILSGVV) form a helical membrane-spanning segment. At 93-104 (GHSAVAFLSERY) the chain is on the vacuolar side. A helical membrane pass occupies residues 105 to 125 (TAFFAGILFLVFGYKLTMEGL). Over 126 to 183 (EMSKDAGVEEEMAEVEEEIAIKDMNQDMDDVEKGGDTAYDKQLKNASIGKKIVHRIRE) the chain is Cytoplasmic. Residues 184-204 (LASFMFSPVWVQIFLMVFLGE) form a helical membrane-spanning segment. Topologically, residues 205–222 (LGDRSQISIIAMATDSDY) are vacuolar. Residues 223–243 (WYVIAGAVIGHAICSGLAVVG) traverse the membrane as a helical segment. At 244-255 (GKLLATRISIRT) the chain is on the cytoplasmic side. Residues 256 to 276 (ITLASSLLFFIFALMYIYQAF) traverse the membrane as a helical segment. At 277-280 (TTQD) the chain is on the vacuolar side.

This sequence belongs to the GDT1 family.

It is found in the golgi apparatus. Its subcellular location is the cis-Golgi network membrane. The catalysed reaction is Ca(2+)(in) + n H(+)(out) = Ca(2+)(out) + n H(+)(in). It carries out the reaction Mn(2+)(in) + n H(+)(out) = Mn(2+)(out) + n H(+)(in). Its function is as follows. Divalent cation:proton antiporter that exchanges calcium or manganese ions for protons across the Golgi membrane. Mediates the reversible transport of calcium or manganese to the Golgi lumen driven by the proton gradient and possibly the membrane potential generated by V-ATPase. Provides calcium or manganese cofactors to resident Golgi enzymes and contributes to the maintenance of an acidic luminal Golgi pH required for proper functioning of the secretory pathway. The transport stoichiometry remains to be elucidated. The chain is Divalent cation/proton antiporter GDT1 from Saccharomyces cerevisiae (strain ATCC 204508 / S288c) (Baker's yeast).